The sequence spans 874 residues: Alanine--tRNA ligase (874 aa).

Zn(2+) is bound by residues H563, H567, C665, and H669.

This sequence belongs to the class-II aminoacyl-tRNA synthetase family. Requires Zn(2+) as cofactor.

The protein resides in the cytoplasm. The catalysed reaction is tRNA(Ala) + L-alanine + ATP = L-alanyl-tRNA(Ala) + AMP + diphosphate. Its function is as follows. Catalyzes the attachment of alanine to tRNA(Ala) in a two-step reaction: alanine is first activated by ATP to form Ala-AMP and then transferred to the acceptor end of tRNA(Ala). Also edits incorrectly charged Ser-tRNA(Ala) and Gly-tRNA(Ala) via its editing domain. The protein is Alanine--tRNA ligase of Haemophilus influenzae (strain ATCC 51907 / DSM 11121 / KW20 / Rd).